The primary structure comprises 103 residues: Large ribosomal subunit protein bL21 (103 aa).

This sequence belongs to the bacterial ribosomal protein bL21 family. In terms of assembly, part of the 50S ribosomal subunit. Contacts protein L20.

Its function is as follows. This protein binds to 23S rRNA in the presence of protein L20. This chain is Large ribosomal subunit protein bL21, found in Chloroflexus aurantiacus (strain ATCC 29364 / DSM 637 / Y-400-fl).